The primary structure comprises 85 residues: Conotoxin Mi15a (85 aa).

Residues 1–23 form the signal peptide; it reads MEKLTVLILVATVLLTIQVLGQS. Positions 24–49 are excised as a propeptide; sequence DRDKHLKRRPKQYATKRLSARMRGHR. A Pyrrolidone carboxylic acid modification is found at glutamine 50.

It belongs to the conotoxin O2 superfamily. In terms of processing, contains 4 disulfide bonds. As to expression, expressed by the venom duct.

Its subcellular location is the secreted. This Conus miles (Soldier cone) protein is Conotoxin Mi15a.